The chain runs to 100 residues: uncharacterized protein (100 aa).

Residues Pro-42–Ala-84 are disordered. The span at Gly-50–Glu-67 shows a compositional bias: gly residues.

This is an uncharacterized protein from Torque teno tamarin virus (isolate So-TTV2).